Consider the following 203-residue polypeptide: ATP-dependent Clp protease proteolytic subunit (203 aa).

The active-site Nucleophile is Ser107. The active site involves His132.

Belongs to the peptidase S14 family. As to quaternary structure, fourteen ClpP subunits assemble into 2 heptameric rings which stack back to back to give a disk-like structure with a central cavity, resembling the structure of eukaryotic proteasomes.

It localises to the cytoplasm. It carries out the reaction Hydrolysis of proteins to small peptides in the presence of ATP and magnesium. alpha-casein is the usual test substrate. In the absence of ATP, only oligopeptides shorter than five residues are hydrolyzed (such as succinyl-Leu-Tyr-|-NHMec, and Leu-Tyr-Leu-|-Tyr-Trp, in which cleavage of the -Tyr-|-Leu- and -Tyr-|-Trp bonds also occurs).. Cleaves peptides in various proteins in a process that requires ATP hydrolysis. Has a chymotrypsin-like activity. Plays a major role in the degradation of misfolded proteins. The polypeptide is ATP-dependent Clp protease proteolytic subunit (Shewanella frigidimarina (strain NCIMB 400)).